We begin with the raw amino-acid sequence, 275 residues long: Large ribosomal subunit protein uL2 (275 aa).

2 disordered regions span residues 1–24 (MGIRSFRPYTPGTRQATVSDFSEI) and 208–275 (AGRT…RRRR). Residues 12 to 22 (GTRQATVSDFS) show a composition bias toward polar residues. Composition is skewed to basic residues over residues 208 to 219 (AGRTRHLGRRPQ) and 255 to 275 (LGKKTRKKKKQSSSLIVRRRR).

This sequence belongs to the universal ribosomal protein uL2 family. Part of the 50S ribosomal subunit. Forms a bridge to the 30S subunit in the 70S ribosome.

Functionally, one of the primary rRNA binding proteins. Required for association of the 30S and 50S subunits to form the 70S ribosome, for tRNA binding and peptide bond formation. It has been suggested to have peptidyltransferase activity; this is somewhat controversial. Makes several contacts with the 16S rRNA in the 70S ribosome. This Picosynechococcus sp. (strain ATCC 27264 / PCC 7002 / PR-6) (Agmenellum quadruplicatum) protein is Large ribosomal subunit protein uL2.